The primary structure comprises 216 residues: 3-keto-L-gulonate-6-phosphate decarboxylase UlaD (216 aa).

Asp11 serves as a coordination point for substrate. Mg(2+) contacts are provided by Glu33 and Asp62. A substrate-binding site is contributed by Arg192.

Belongs to the HPS/KGPDC family. KGPDC subfamily. In terms of assembly, homodimer. Mg(2+) serves as cofactor.

The enzyme catalyses 3-dehydro-L-gulonate 6-phosphate + H(+) = L-xylulose 5-phosphate + CO2. It functions in the pathway cofactor degradation; L-ascorbate degradation; D-xylulose 5-phosphate from L-ascorbate: step 2/4. Catalyzes the decarboxylation of 3-keto-L-gulonate-6-P into L-xylulose-5-P. Is involved in the anaerobic L-ascorbate utilization. The sequence is that of 3-keto-L-gulonate-6-phosphate decarboxylase UlaD from Escherichia coli O127:H6 (strain E2348/69 / EPEC).